Consider the following 249-residue polypeptide: Probable aquaporin TIP-type (249 aa).

Transmembrane regions (helical) follow at residues 22 to 42 (AGLA…GSGI) and 56 to 76 (AGLI…VSVG). Positions 85–87 (NPA) match the NPA 1 motif. 3 helical membrane-spanning segments follow: residues 103–123 (IVYI…LVFV), 137–157 (VGVG…VYTV), and 169–189 (IGII…LVGG). The NPA 2 motif lies at 197–199 (NPA). Residues 217–237 (YWAGPLIGGGIAGLVYEVLFI) traverse the membrane as a helical segment.

The protein belongs to the MIP/aquaporin (TC 1.A.8) family. TIP (TC 1.A.8.10) subfamily. Expression is highest in root tips, with slightly lower levels of hybridizing mRNA in stems, and whole roots, and much lower levels in nodules and leaves.

It is found in the membrane. Aquaporins facilitate the transport of water and small neutral solutes across cell membranes. The protein is Probable aquaporin TIP-type (MCP1) of Medicago sativa (Alfalfa).